Here is a 920-residue protein sequence, read N- to C-terminus: MSTNEQLAWDFDDGDVAAVRPDTGIARFAPGSEQWIAALQPTDDDAIRLDRFDVNMMTAEAAARLWARVAAWVESDQIAYYIDDSPVSSDAAYDARMRCLERLEAAFPSLDNPQSPTHRVGGSFSNDFTSVRHPSRMMSLDDVFSIEELKDWYDSVIRDLDWPESKPLPMSCEVKIDGLALNLIYRNGVLEQGLTRGDGVTGEDITLNVRTIGSIPANLGGPKEDVPDFVEIRGEVFMRWDDFHTLNNEQEDAGRAPFANPRNAAAGSLRQKDPRITATRRLSFYAHGLGQLTWGPDHPRGTHDVVADQSQAYDLYTKWGVPVSPHNRAVTSFQEILDMIEYYGEHRGDIEHALDGIVVKVDDLGLQRTLGATSRAPRWAIAYKYPPEEVNTELLNITVQVGRTGRVTPVAVLKPVYVAGSTVARTTLHNGFEVKRKGILIGDTVVVRKAGDVIPELVGPVLERRKGREDQLREFVMPEFCPSCGAKLSPAKEGDKDIRCPNVESCPAQLTERVISLASRKAFDIEHLGEQSAIALTNPEENRPDSVATYAPNITEVLVAPGEEPDPYEPVEGLELPAAQKPVLSNESGLFNLTAADLRDVRVWREAAIVEVHETVGANGKKKKVRKRVGGSGLWHQVPAFWTAPTPAKKLTAKQLVERAQGEAAIESAETQGDTASETTGAPTGAEAPLGTMPGFAAASYPEYDVPADAVIVRVDHKTTRTGVTDVPVIIRPGENTRKMFDEMDKARHADLWRVLVALSIRRLGPPTARLIASAMGSLAAIENATIEDLTAIDGVGPEIAESVVNWFAATREPGDWRGATLRAWQAAGVGVDEAETSSLPQTLAGKTVVVTGSLEGYSRDSAKEAIIERGGKAAGSVSKKTDYVVIGANAGSKAAKAEELGIPMLSETQFAQLLATGTI.

Residues 90–94 (DAAYD), 139–140 (SL), and glutamate 173 contribute to the NAD(+) site. Residue lysine 175 is the N6-AMP-lysine intermediate of the active site. NAD(+) is bound by residues arginine 196, glutamate 235, lysine 360, and lysine 384. Cysteine 481, cysteine 484, cysteine 500, and cysteine 506 together coordinate Zn(2+). Residues 662-691 (GEAAIESAETQGDTASETTGAPTGAEAPLG) are disordered. Residues 669–682 (AETQGDTASETTGA) are compositionally biased toward polar residues. Positions 839-920 (SLPQTLAGKT…FAQLLATGTI (82 aa)) constitute a BRCT domain.

This sequence belongs to the NAD-dependent DNA ligase family. LigA subfamily. It depends on Mg(2+) as a cofactor. The cofactor is Mn(2+).

The catalysed reaction is NAD(+) + (deoxyribonucleotide)n-3'-hydroxyl + 5'-phospho-(deoxyribonucleotide)m = (deoxyribonucleotide)n+m + AMP + beta-nicotinamide D-nucleotide.. DNA ligase that catalyzes the formation of phosphodiester linkages between 5'-phosphoryl and 3'-hydroxyl groups in double-stranded DNA using NAD as a coenzyme and as the energy source for the reaction. It is essential for DNA replication and repair of damaged DNA. This chain is DNA ligase, found in Bifidobacterium longum (strain DJO10A).